The following is a 279-amino-acid chain: Pleckstrin homology domain-containing family F member 1 (279 aa).

The PH domain occupies 35 to 131 (VLLGEGVLTK…WISHIEECVR (97 aa)). The FYVE-type zinc-finger motif lies at 152-212 (DKATDICMRC…VCSLCYRELA (61 aa)). 8 residues coordinate Zn(2+): C158, C161, C175, C178, C183, C186, C204, and C207. The segment at 219 to 264 (EAKERFRGSPGQLTHLGSTMCGASSGDDDDSDEDREGSGDGDWPTQ) is disordered. The span at 244–253 (GDDDDSDEDR) shows a compositional bias: acidic residues.

Its subcellular location is the nucleus. It localises to the cytoplasm. The protein resides in the perinuclear region. The protein localises to the lysosome. Its function is as follows. May induce apoptosis through the lysosomal-mitochondrial pathway. Translocates to the lysosome initiating the permeabilization of lysosomal membrane (LMP) and resulting in the release of CTSD and CTSL to the cytoplasm. Triggers the caspase-independent apoptosis by altering mitochondrial membrane permeabilization (MMP) resulting in the release of PDCD8. This is Pleckstrin homology domain-containing family F member 1 (Plekhf1) from Rattus norvegicus (Rat).